The following is a 1068-amino-acid chain: Protein AF-10 (1068 aa).

A PHD-type 1 zinc finger spans residues 22–74; sequence IGGCCVCSDERGWAENPLVYCDGHGCSVAVHQACYGIVQVPTGPWFCRKCESQ. Residues 79 to 112 form a C2HC pre-PHD-type zinc finger; sequence RVRCELCPHKDGALKRTDNGGWAHVVCALYIPEV. The tract at residues 80-287 is self-association; it reads VRCELCPHKD…SLKRLEDTTA (208 aa). The interval 106–190 is required for interaction with histone H3; the sequence is ALYIPEVQFA…EGNGADNVQY (85 aa). The PHD-type 2 zinc-finger motif lies at 135–198; it reads KTCYICDEQG…QYCGYCKYHF (64 aa). The segment at 141–233 is interaction with FSTL3; that stretch reads DEQGRESKAA…QDKHHEKEKK (93 aa). The interval 206–260 is disordered; sequence RGSNRSYDQSLSDSSSHSQDKHHEKEKKKYKEKDKHKQKHKKQPEPSPALVPSLT. Residues 211-222 show a composition bias toward low complexity; the sequence is SYDQSLSDSSSH. The residue at position 217 (serine 217) is a Phosphoserine. Residues 223-240 are compositionally biased toward basic and acidic residues; sequence SQDKHHEKEKKKYKEKDK. Position 252 is a phosphoserine (serine 252). Lysine 280 participates in a covalent cross-link: Glycyl lysine isopeptide (Lys-Gly) (interchain with G-Cter in SUMO2). The span at 291–305 shows a compositional bias: polar residues; it reads NANFQEVSAHTSSGK. Residues 291–505 form a disordered region; the sequence is NANFQEVSAH…SSASPTSSVA (215 aa). The segment covering 306–317 has biased composition (basic and acidic residues); sequence DVSETRGSEGKG. Positions 311 to 674 are DNA-binding; sequence RGSEGKGKKS…QDLGDNSRNL (364 aa). The span at 352 to 372 shows a compositional bias: low complexity; sequence SFSGTPGSVKSSSGSSVQSPQ. Composition is skewed to polar residues over residues 387 to 396 and 404 to 446; these read YSHSQQSSAT and SGSQ…SSLP. Phosphoserine is present on serine 436. Residues 465 to 483 show a composition bias toward basic residues; it reads EKKRKGNKQSKHGPGRPKG. Over residues 490–505 the composition is skewed to low complexity; it reads VSHLSVSSASPTSSVA. At serine 532 the chain carries Phosphoserine. The segment covering 583-594 has biased composition (low complexity); the sequence is SGSGSSTPVSSS. Disordered regions lie at residues 583-612 and 660-708; these read SGSGSSTPVSSSHLPQQSSGHLQQVGALSP and NNQT…SLEN. Polar residues-rich tracts occupy residues 595–604 and 660–673; these read HLPQQSSGHL and NNQTDQDLGDNSRN. Residues 674-694 are compositionally biased toward low complexity; sequence LVGRGSSPRGSLSPRSPVSSL. A phosphoserine mark is found at serine 684, serine 686, and serine 689. The segment at 703–784 is transactivation domain; required for DOT1L-binding; that stretch reads NSSLENLPPV…NAQLSVPFPT (82 aa). A leucine-zipper region spans residues 750 to 778; it reads LQVENRRLEEQIKNLTAKKERLQLLNAQL. A compositionally biased stretch (polar residues) spans 800 to 814; it reads AQTAPTTDSLNSSKS. Residues 800-865 form a disordered region; that stretch reads AQTAPTTDSL…SPAQQGSGVS (66 aa). 2 stretches are compositionally biased toward low complexity: residues 834 to 848 and 855 to 865; these read LTSSGQSTSSSSALS and QSPAQQGSGVS.

Self-associates. Interacts with FSTL3 isoform 2; the interaction enhances MLLT10 in vitro transcriptional activity and self-association. Interacts with YEATS4. Interacts with SS18. Interacts with DOT1L; this interaction also occurs with the KMT2A/MLL1 fusion protein. Interacts with histone H3; interaction is necessary for MLLT10 binding to nucleosomes; interaction is inhibited by histone H3 'Lys-27' methylations (H3K27me1, H3K27me2 and H3K27me3) amd acetylation; interaction stabilizes association of MLLT10 at chromatin; interaction is essential for histone H3 'Lys-79' dimethylation (H3K79me2). As to expression, expressed abundantly in testis.

Its subcellular location is the nucleus. Functionally, probably involved in transcriptional regulation. In vitro or as fusion protein with KMT2A/MLL1 has transactivation activity. Binds to cruciform DNA. In cells, binding to unmodified histone H3 regulates DOT1L functions including histone H3 'Lys-79' dimethylation (H3K79me2) and gene activation. This is Protein AF-10 from Homo sapiens (Human).